Here is a 335-residue protein sequence, read N- to C-terminus: Anthranilate phosphoribosyltransferase (335 aa).

Residues Gly-79, 82 to 83 (GD), Thr-87, 89 to 92 (NIST), 107 to 115 (KHCNQGVSS), and Ser-119 each bind 5-phospho-alpha-D-ribose 1-diphosphate. Gly-79 contributes to the anthranilate binding site. Ser-91 is a binding site for Mg(2+). Residue Asn-110 participates in anthranilate binding. Residue Arg-165 coordinates anthranilate. Asp-223 and Glu-224 together coordinate Mg(2+).

Belongs to the anthranilate phosphoribosyltransferase family. Homodimer. The cofactor is Mg(2+).

It carries out the reaction N-(5-phospho-beta-D-ribosyl)anthranilate + diphosphate = 5-phospho-alpha-D-ribose 1-diphosphate + anthranilate. It functions in the pathway amino-acid biosynthesis; L-tryptophan biosynthesis; L-tryptophan from chorismate: step 2/5. Catalyzes the transfer of the phosphoribosyl group of 5-phosphorylribose-1-pyrophosphate (PRPP) to anthranilate to yield N-(5'-phosphoribosyl)-anthranilate (PRA). This Buchnera aphidicola subsp. Diuraphis noxia protein is Anthranilate phosphoribosyltransferase.